The primary structure comprises 297 residues: Octopine catabolism/uptake operon regulatory protein OccR (297 aa).

The HTH lysR-type domain maps to Met1–Thr58. A DNA-binding region (H-T-H motif) is located at residues Met18–Lys37.

Belongs to the LysR transcriptional regulatory family.

Functionally, positive regulatory protein for the occ operon involved in octopine catabolism and uptake. Also acts as a negative regulator of its expression. The polypeptide is Octopine catabolism/uptake operon regulatory protein OccR (occR) (Rhizobium meliloti (Ensifer meliloti)).